A 299-amino-acid polypeptide reads, in one-letter code: Oxygen-dependent coproporphyrinogen-III oxidase (299 aa).

Ser92 contributes to the substrate binding site. The Mn(2+) site is built by His96 and His106. His106 acts as the Proton donor in catalysis. Residue 108–110 (NVR) participates in substrate binding. Residues His145 and His175 each coordinate Mn(2+). The interval 240–275 (YVEFNLVWDRGTLFGLQTGGRTESILMSMPPLVRWE) is important for dimerization. 258–260 (GGR) is a substrate binding site.

This sequence belongs to the aerobic coproporphyrinogen-III oxidase family. Homodimer. Mn(2+) serves as cofactor.

The protein localises to the cytoplasm. The enzyme catalyses coproporphyrinogen III + O2 + 2 H(+) = protoporphyrinogen IX + 2 CO2 + 2 H2O. Its pathway is porphyrin-containing compound metabolism; protoporphyrin-IX biosynthesis; protoporphyrinogen-IX from coproporphyrinogen-III (O2 route): step 1/1. In terms of biological role, involved in the heme biosynthesis. Catalyzes the aerobic oxidative decarboxylation of propionate groups of rings A and B of coproporphyrinogen-III to yield the vinyl groups in protoporphyrinogen-IX. In Escherichia coli (strain SMS-3-5 / SECEC), this protein is Oxygen-dependent coproporphyrinogen-III oxidase.